The following is a 486-amino-acid chain: Katanin p60 ATPase-containing subunit A1 (486 aa).

Residues 103-174 are disordered; it reads RSSPLPVRRP…NKAEVSEKEV (72 aa). The span at 143–174 shows a compositional bias: basic and acidic residues; the sequence is NGDRAKPLKGKEKKEAKPKDDKNKAEVSEKEV. 244 to 251 contacts ATP; it reads GPPGTGKT.

The protein belongs to the AAA ATPase family. Katanin p60 subunit A1 subfamily. As to quaternary structure, can homooligomerize into hexameric rings, which may be promoted by interaction with microtubules. Interacts with katnb1, which may serve as a targeting subunit.

It localises to the cytoplasm. Its subcellular location is the cytoskeleton. The protein resides in the microtubule organizing center. It is found in the centrosome. The protein localises to the spindle pole. It localises to the spindle. The enzyme catalyses n ATP + n H2O + a microtubule = n ADP + n phosphate + (n+1) alpha/beta tubulin heterodimers.. ATPase activity is stimulated by microtubules, which promote homooligomerization. ATP-dependent microtubule severing is stimulated by interaction with katnb1. Functionally, catalytic subunit of a complex which severs microtubules in an ATP-dependent manner. Microtubule severing may promote rapid reorganization of cellular microtubule arrays and the release of microtubules from the centrosome following nucleation. This chain is Katanin p60 ATPase-containing subunit A1 (katna1), found in Salmo salar (Atlantic salmon).